We begin with the raw amino-acid sequence, 414 residues long: Tryptophan synthase beta chain (414 aa).

Lysine 109 is modified (N6-(pyridoxal phosphate)lysine).

The protein belongs to the TrpB family. In terms of assembly, tetramer of two alpha and two beta chains. It depends on pyridoxal 5'-phosphate as a cofactor.

The enzyme catalyses (1S,2R)-1-C-(indol-3-yl)glycerol 3-phosphate + L-serine = D-glyceraldehyde 3-phosphate + L-tryptophan + H2O. It functions in the pathway amino-acid biosynthesis; L-tryptophan biosynthesis; L-tryptophan from chorismate: step 5/5. The beta subunit is responsible for the synthesis of L-tryptophan from indole and L-serine. This Prochlorococcus marinus (strain AS9601) protein is Tryptophan synthase beta chain.